The chain runs to 455 residues: Ribosomal protein uS12 methylthiotransferase RimO (455 aa).

Positions 21–131 (GKVGFISLGC…VVGAVHQYVP (111 aa)) constitute an MTTase N-terminal domain. Residues Cys-30, Cys-66, Cys-95, Cys-164, Cys-168, and Cys-171 each contribute to the [4Fe-4S] cluster site. A Radical SAM core domain is found at 150–387 (LTPRHYAYLK…MAKQAEISAA (238 aa)). Residues 390–455 (QAKIGRTIDV…DEHDLWARLI (66 aa)) enclose the TRAM domain.

Belongs to the methylthiotransferase family. RimO subfamily. The cofactor is [4Fe-4S] cluster.

It localises to the cytoplasm. It catalyses the reaction L-aspartate(89)-[ribosomal protein uS12]-hydrogen + (sulfur carrier)-SH + AH2 + 2 S-adenosyl-L-methionine = 3-methylsulfanyl-L-aspartate(89)-[ribosomal protein uS12]-hydrogen + (sulfur carrier)-H + 5'-deoxyadenosine + L-methionine + A + S-adenosyl-L-homocysteine + 2 H(+). Functionally, catalyzes the methylthiolation of an aspartic acid residue of ribosomal protein uS12. This chain is Ribosomal protein uS12 methylthiotransferase RimO, found in Marinobacter nauticus (strain ATCC 700491 / DSM 11845 / VT8) (Marinobacter aquaeolei).